The primary structure comprises 271 residues: Mannosyl-3-phosphoglycerate phosphatase (271 aa).

Residue D13 is the Nucleophile of the active site. Mg(2+) is bound by residues D13, D15, and D214.

The protein belongs to the HAD-like hydrolase superfamily. MPGP family. Mg(2+) is required as a cofactor.

It is found in the cytoplasm. It catalyses the reaction 2-O-(alpha-D-mannosyl)-3-phosphoglycerate + H2O = (2R)-2-O-(alpha-D-mannosyl)-glycerate + phosphate. The sequence is that of Mannosyl-3-phosphoglycerate phosphatase from Escherichia coli (strain SE11).